A 251-amino-acid polypeptide reads, in one-letter code: Lactose phosphotransferase system repressor (251 aa).

The HTH deoR-type domain occupies 3-58 (KHERLDEIAKLVNKKGTIRTNEIVEGLNVSDMTVRRDLIELENKGILTKIHGGARS). Positions 20-39 (IRTNEIVEGLNVSDMTVRRD) form a DNA-binding region, H-T-H motif.

In terms of biological role, repressor of the lactose catabolism operon. Galactose-6-phosphate is the inducer. The chain is Lactose phosphotransferase system repressor (lacR) from Staphylococcus aureus (strain MRSA252).